We begin with the raw amino-acid sequence, 78 residues long: UPF0335 protein A1C_00850 (78 aa).

Belongs to the UPF0335 family.

The polypeptide is UPF0335 protein A1C_00850 (Rickettsia akari (strain Hartford)).